Consider the following 247-residue polypeptide: Phosphoribosylaminoimidazole-succinocarboxamide synthase (247 aa).

This sequence belongs to the SAICAR synthetase family.

It catalyses the reaction 5-amino-1-(5-phospho-D-ribosyl)imidazole-4-carboxylate + L-aspartate + ATP = (2S)-2-[5-amino-1-(5-phospho-beta-D-ribosyl)imidazole-4-carboxamido]succinate + ADP + phosphate + 2 H(+). It participates in purine metabolism; IMP biosynthesis via de novo pathway; 5-amino-1-(5-phospho-D-ribosyl)imidazole-4-carboxamide from 5-amino-1-(5-phospho-D-ribosyl)imidazole-4-carboxylate: step 1/2. This chain is Phosphoribosylaminoimidazole-succinocarboxamide synthase, found in Gloeobacter violaceus (strain ATCC 29082 / PCC 7421).